We begin with the raw amino-acid sequence, 346 residues long: Rhomboid protein 1, mitochondrial (346 aa).

The N-terminal 73 residues, 1-73 (MSGVSSVMLG…RFFSQTSILK (73 aa)), are a transit peptide targeting the mitochondrion. A run of 6 helical transmembrane segments spans residues 109 to 129 (SMTI…PYLF), 145 to 165 (LVYA…LPKC), 203 to 223 (MLAL…SNFF), 246 to 266 (LAIV…LGCF), 275 to 295 (ILLF…ASVA), and 308 to 328 (FDYA…WYIS). S256 serves as the catalytic Nucleophile. Residue H313 is part of the active site.

This sequence belongs to the peptidase S54 family.

It localises to the mitochondrion inner membrane. The enzyme catalyses Cleaves type-1 transmembrane domains using a catalytic dyad composed of serine and histidine that are contributed by different transmembrane domains.. In terms of biological role, mitochondrial rhomboid serine protease processing the mitochondrial membrane fusion regulator MGM1, and the cytochrome c peroxidase (CCP1). Required for TIM11 stability, ATP synthase complex assembly, mitochondrial morphology, cytochrome c (CYC1) storage and mitochondrial genome maintenance. The polypeptide is Rhomboid protein 1, mitochondrial (PCP1) (Saccharomyces cerevisiae (strain ATCC 204508 / S288c) (Baker's yeast)).